A 417-amino-acid chain; its full sequence is UDP-N-acetylglucosamine 1-carboxyvinyltransferase (417 aa).

Position 22–23 (22–23) interacts with phosphoenolpyruvate; the sequence is KN. Arg92 contacts UDP-N-acetyl-alpha-D-glucosamine. Cys116 functions as the Proton donor in the catalytic mechanism. Position 116 is a 2-(S-cysteinyl)pyruvic acid O-phosphothioketal (Cys116). 2 residues coordinate UDP-N-acetyl-alpha-D-glucosamine: Asp304 and Ile326.

The protein belongs to the EPSP synthase family. MurA subfamily.

Its subcellular location is the cytoplasm. The catalysed reaction is phosphoenolpyruvate + UDP-N-acetyl-alpha-D-glucosamine = UDP-N-acetyl-3-O-(1-carboxyvinyl)-alpha-D-glucosamine + phosphate. It participates in cell wall biogenesis; peptidoglycan biosynthesis. Cell wall formation. Adds enolpyruvyl to UDP-N-acetylglucosamine. In Geobacter metallireducens (strain ATCC 53774 / DSM 7210 / GS-15), this protein is UDP-N-acetylglucosamine 1-carboxyvinyltransferase.